The primary structure comprises 805 residues: Acetyl-CoA decarbonylase/synthase complex subunit alpha 3 (805 aa).

The [4Fe-4S] cluster site is built by Cys-72, Cys-75, Cys-76, Cys-78, Cys-83, and Cys-93. Residue His-116 coordinates CO. [Ni-4Fe-4S] cluster is bound by residues His-249, Cys-277, and Cys-322. 4Fe-4S ferredoxin-type domains are found at residues 407–435 (EEFK…IPEA) and 445–474 (EYLE…LNVL). Cys-416, Cys-419, Cys-422, Cys-426, Cys-454, Cys-457, Cys-460, and Cys-464 together coordinate [4Fe-4S] cluster. 3 residues coordinate [Ni-4Fe-4S] cluster: Cys-522, Cys-551, and Cys-586.

Belongs to the Ni-containing carbon monoxide dehydrogenase family. In terms of assembly, heterotetramer of two alpha and two epsilon subunits. The ACDS complex is made up of alpha, epsilon, beta, gamma and delta subunits with a probable stoichiometry of (alpha(2)epsilon(2))(4)-beta(8)-(gamma(1)delta(1))(8). [4Fe-4S] cluster serves as cofactor. It depends on [Ni-4Fe-4S] cluster as a cofactor.

It carries out the reaction CO + 2 oxidized [2Fe-2S]-[ferredoxin] + H2O = 2 reduced [2Fe-2S]-[ferredoxin] + CO2 + 2 H(+). Its pathway is one-carbon metabolism; methanogenesis from acetate. Its function is as follows. Part of the ACDS complex that catalyzes the reversible cleavage of acetyl-CoA, allowing growth on acetate as sole source of carbon and energy. The alpha-epsilon subcomponent functions as a carbon monoxide dehydrogenase. The polypeptide is Acetyl-CoA decarbonylase/synthase complex subunit alpha 3 (Methanosarcina acetivorans (strain ATCC 35395 / DSM 2834 / JCM 12185 / C2A)).